The primary structure comprises 139 residues: Small ribosomal subunit protein uS12 (139 aa).

Residues 1-21 (MSTVSQLIKKRRSSKTSKTKA) are disordered. A compositionally biased stretch (basic residues) spans 8-18 (IKKRRSSKTSK). Asp-102 carries the 3-methylthioaspartic acid modification.

Belongs to the universal ribosomal protein uS12 family. Part of the 30S ribosomal subunit. Contacts proteins S8 and S17. May interact with IF1 in the 30S initiation complex.

In terms of biological role, with S4 and S5 plays an important role in translational accuracy. Functionally, interacts with and stabilizes bases of the 16S rRNA that are involved in tRNA selection in the A site and with the mRNA backbone. Located at the interface of the 30S and 50S subunits, it traverses the body of the 30S subunit contacting proteins on the other side and probably holding the rRNA structure together. The combined cluster of proteins S8, S12 and S17 appears to hold together the shoulder and platform of the 30S subunit. The protein is Small ribosomal subunit protein uS12 of Aster yellows witches'-broom phytoplasma (strain AYWB).